The sequence spans 962 residues: MPRSTWFKALLLLVALWAPLSQAETGWQPIQETIRKSDKDNRQYQAIRLDNGMVVLLVSDPQAVKSLSALVVPVGSLEDPEAYQGLAHYLEHMSLMGSKKYPQADSLAEYLKMHGGSHNASTAPYRTAFYLEVENDALPGAVDRLADAIAEPLLDKKYAERERNAVNAELTMARTRDGMRMAQVSAETINPAHPGSKFSGGNLETLSDKPGNPVQQALKDFHEKYYSANLMKAVIYSNKPLPELAKMAADTFGRVPNKESKKPEITVPVVTDAQKGIIIHYVPALPRKVLRVEFRIDNNSAKFRSKTDELITYLIGNRSPGTLSDWLQKQGLVEGISANSDPIVNGNSGVLAISASLTDKGLANRDQVVAAIFSYLNLLREKGIDKQYFDELANVLDIDFRYPSITRDMDYVEWLADTMIRVPVEHTLDAVNIADRYDAKAVKERLAMMTPQNARIWYISPKEPHNKTAYFVDAPYQVDKISAQTFADWQKKAADIALSLPELNPYIPDDFSLIKSEKKYDHPELIVDESNLRVVYAPSRYFASEPKADVSLILRNPKAMDSARNQVMFALNDYLAGLALDQLSNQASVGGISFSTNANNGLMVNANGYTQRLPQLFQALLEGYFSYTATEDQLEQAKSWYNQMMDSAEKGKAFEQAIMPAQMLSQVPYFSRDERRKILPSITLKEVLAYRDALKSGARPEFMVIGNMTEAQATTLARDVQKQLGADGSEWCRNKDVVVDKKQSVIFEKAGNSTDSALAAVFVPTGYDEYTSSAYSSLLGQIVQPWFYNQLRTEEQLGYAVFAFPMSVGRQWGMGFLLQSNDKQPSFLWERYKAFFPTAEAKLRAMKPDEFAQIQQAVITQMLQAPQTLGEEASKLSKDFDRGNMRFDSRDKIVAQIKLLTPQKLADFFHQAVVEPQGMAILSQISGSQNGKAEYVHPEGWKVWENVSALQQTMPLMSEKNE.

Positions 1–23 (MPRSTWFKALLLLVALWAPLSQA) are cleaved as a signal peptide. Residue His-88 coordinates Zn(2+). Glu-91 serves as the catalytic Proton acceptor. Positions 92 and 169 each coordinate Zn(2+).

It belongs to the peptidase M16 family. As to quaternary structure, monomer. Requires Zn(2+) as cofactor.

It is found in the periplasm. It carries out the reaction Preferential cleavage of 16-Tyr-|-Leu-17 and 25-Phe-|-Tyr-26 bonds of oxidized insulin B chain. Also acts on other substrates of Mw less than 7 kDa such as insulin and glucagon.. Endopeptidase that degrades small peptides of less than 7 kDa, such as glucagon and insulin. This is Protease 3 (ptrA) from Escherichia coli (strain K12).